Here is a 166-residue protein sequence, read N- to C-terminus: Large ribosomal subunit protein uL10 (166 aa).

This sequence belongs to the universal ribosomal protein uL10 family. As to quaternary structure, part of the ribosomal stalk of the 50S ribosomal subunit. The N-terminus interacts with L11 and the large rRNA to form the base of the stalk. The C-terminus forms an elongated spine to which L12 dimers bind in a sequential fashion forming a multimeric L10(L12)X complex.

Its function is as follows. Forms part of the ribosomal stalk, playing a central role in the interaction of the ribosome with GTP-bound translation factors. In Shouchella clausii (strain KSM-K16) (Alkalihalobacillus clausii), this protein is Large ribosomal subunit protein uL10.